Here is a 193-residue protein sequence, read N- to C-terminus: dCTP deaminase (193 aa).

DCTP-binding positions include 110-115 (RSSLAR), Asp-128, 136-138 (VLE), Tyr-171, Lys-178, and Gln-182. Glu-138 (proton donor/acceptor) is an active-site residue. The interval 169–193 (RPYNRRQDAKYKDQQGAVASRIDKD) is disordered.

Belongs to the dCTP deaminase family. Homotrimer.

The enzyme catalyses dCTP + H2O + H(+) = dUTP + NH4(+). The protein operates within pyrimidine metabolism; dUMP biosynthesis; dUMP from dCTP (dUTP route): step 1/2. Functionally, catalyzes the deamination of dCTP to dUTP. The sequence is that of dCTP deaminase from Pectobacterium carotovorum subsp. carotovorum (strain PC1).